We begin with the raw amino-acid sequence, 212 residues long: FMN-dependent NADH:quinone oxidoreductase (212 aa).

Residues serine 10 and 17 to 19 contribute to the FMN site; that span reads SFS.

It belongs to the azoreductase type 1 family. Homodimer. FMN serves as cofactor.

The enzyme catalyses 2 a quinone + NADH + H(+) = 2 a 1,4-benzosemiquinone + NAD(+). It carries out the reaction N,N-dimethyl-1,4-phenylenediamine + anthranilate + 2 NAD(+) = 2-(4-dimethylaminophenyl)diazenylbenzoate + 2 NADH + 2 H(+). Quinone reductase that provides resistance to thiol-specific stress caused by electrophilic quinones. In terms of biological role, also exhibits azoreductase activity. Catalyzes the reductive cleavage of the azo bond in aromatic azo compounds to the corresponding amines. The chain is FMN-dependent NADH:quinone oxidoreductase from Malacoplasma penetrans (strain HF-2) (Mycoplasma penetrans).